Consider the following 432-residue polypeptide: Adenylosuccinate synthetase (432 aa).

GTP is bound by residues 13–19 (GDEGKGK) and 41–43 (GHT). The Proton acceptor role is filled by aspartate 14. Mg(2+) is bound by residues aspartate 14 and glycine 41. Residues 14–17 (DEGK), 39–42 (NAGH), threonine 130, arginine 144, glutamine 225, threonine 240, and arginine 304 contribute to the IMP site. The active-site Proton donor is histidine 42. 300–306 (ATTGRPR) provides a ligand contact to substrate. GTP-binding positions include arginine 306, 332-334 (KLD), and 415-417 (STG).

This sequence belongs to the adenylosuccinate synthetase family. As to quaternary structure, homodimer. Mg(2+) serves as cofactor.

The protein resides in the cytoplasm. The catalysed reaction is IMP + L-aspartate + GTP = N(6)-(1,2-dicarboxyethyl)-AMP + GDP + phosphate + 2 H(+). It functions in the pathway purine metabolism; AMP biosynthesis via de novo pathway; AMP from IMP: step 1/2. Functionally, plays an important role in the de novo pathway of purine nucleotide biosynthesis. Catalyzes the first committed step in the biosynthesis of AMP from IMP. This chain is Adenylosuccinate synthetase, found in Hahella chejuensis (strain KCTC 2396).